Reading from the N-terminus, the 633-residue chain is Probable potassium transport system protein Kup (633 aa).

12 helical membrane-spanning segments follow: residues 19–39 (LGML…SPLY), 61–81 (ILAL…VLFI), 112–132 (VLVI…MITP), 148–168 (SGLE…LFLI), 179–199 (LFGP…INGI), 217–237 (FFIV…LALT), 258–278 (WFAL…ALLL), 290–310 (LLAP…ATVI), 348–368 (IYIG…VLGF), 380–400 (VAVT…MLLL), 405–425 (PVLA…FFAA), and 430–450 (IFQG…LMTT).

This sequence belongs to the HAK/KUP transporter (TC 2.A.72) family.

It localises to the cell inner membrane. The enzyme catalyses K(+)(in) + H(+)(in) = K(+)(out) + H(+)(out). Its function is as follows. Transport of potassium into the cell. Likely operates as a K(+):H(+) symporter. The polypeptide is Probable potassium transport system protein Kup (Pseudomonas fluorescens (strain ATCC BAA-477 / NRRL B-23932 / Pf-5)).